A 341-amino-acid chain; its full sequence is HTH-type transcriptional repressor PurR (341 aa).

Residues 2–56 (ATIKDVAKRAGVSTTTVSHVINKTRFVAENTRAAVWAAIKELNYSPSAVARSLKV) form the HTH lacI-type domain. A DNA-binding region (H-T-H motif) is located at residues 4-23 (IKDVAKRAGVSTTTVSHVIN). A DNA-binding region spans residues 48 to 56 (SAVARSLKV). Residues tyrosine 73, arginine 190, threonine 192, phenylalanine 221, and aspartate 275 each coordinate hypoxanthine.

In terms of assembly, homodimer.

It functions in the pathway purine metabolism; purine nucleotide biosynthesis [regulation]. In terms of biological role, is the main repressor of the genes involved in the de novo synthesis of purine nucleotides, regulating purB, purC, purEK, purF, purHD, purL, purMN and guaBA expression. PurR is allosterically activated to bind its cognate DNA by binding the purine corepressors, hypoxanthine or guanine, thereby effecting transcription repression. The chain is HTH-type transcriptional repressor PurR from Proteus mirabilis (strain HI4320).